The chain runs to 180 residues: Large ribosomal subunit protein uL5 (180 aa).

Belongs to the universal ribosomal protein uL5 family. As to quaternary structure, part of the 50S ribosomal subunit; part of the 5S rRNA/L5/L18/L25 subcomplex. Contacts the 5S rRNA and the P site tRNA. Forms a bridge to the 30S subunit in the 70S ribosome.

Its function is as follows. This is one of the proteins that bind and probably mediate the attachment of the 5S RNA into the large ribosomal subunit, where it forms part of the central protuberance. In the 70S ribosome it contacts protein S13 of the 30S subunit (bridge B1b), connecting the 2 subunits; this bridge is implicated in subunit movement. Contacts the P site tRNA; the 5S rRNA and some of its associated proteins might help stabilize positioning of ribosome-bound tRNAs. This Streptococcus pyogenes serotype M49 (strain NZ131) protein is Large ribosomal subunit protein uL5.